A 729-amino-acid polypeptide reads, in one-letter code: Neurochondrin (729 aa).

Ser2 is modified (N-acetylserine). Ser2 carries the phosphoserine modification. Residues Cys3 and Cys4 are each lipidated (S-palmitoyl cysteine). Arg75 bears the Asymmetric dimethylarginine mark. At Ser448 the chain carries Phosphoserine.

This sequence belongs to the neurochondrin family. As to quaternary structure, interacts with MCHR1. Interacts with SEMA4C. Interacts with DIAPH1 (via FH3 domain). Interacts with GRM5. Palmitoylated. Palmitoylation by ZDHHC1, ZDHHC3 and ZDHHC11 regulates the association of NCDN with endosome membranes. May also be palmitoylated by ZDHHC7. As to expression, expressed in brain and in peripheral nervous system (at protein level). Weakly expressed in neurites.

The protein localises to the cytoplasm. Its subcellular location is the cytosol. It is found in the endosome membrane. It localises to the cell projection. The protein resides in the dendrite. The protein localises to the postsynapse. Probably involved in signal transduction, in the nervous system, via increasing cell surface localization of GRM5 and positively regulating its signaling. Required for the spatial learning process. Acts as a negative regulator of Ca(2+)-calmodulin-dependent protein kinase 2 (CaMK2) phosphorylation. May play a role in modulating melanin-concentrating hormone-mediated functions via its interaction with MCHR1 that interferes with G protein-coupled signal transduction. May be involved in bone metabolism. May also be involved in neurite outgrowth. In Rattus norvegicus (Rat), this protein is Neurochondrin (Ncdn).